The primary structure comprises 373 residues: Mannitol-1-phosphate 5-dehydrogenase (373 aa).

3–14 (ALHFGAGNIGRG) contacts NAD(+).

This sequence belongs to the mannitol dehydrogenase family.

The enzyme catalyses D-mannitol 1-phosphate + NAD(+) = beta-D-fructose 6-phosphate + NADH + H(+). This chain is Mannitol-1-phosphate 5-dehydrogenase, found in Bacillus pumilus (strain SAFR-032).